The following is a 460-amino-acid chain: uncharacterized protein (460 aa).

This is an uncharacterized protein from Haemophilus influenzae (strain ATCC 51907 / DSM 11121 / KW20 / Rd).